The chain runs to 484 residues: Adenylosuccinate lyase (484 aa).

Ala2 carries the post-translational modification N-acetylalanine. Substrate is bound by residues 20-21 (RY), 85-87 (RHD), and 111-112 (TS). Lys147 carries the post-translational modification N6-acetyllysine. Catalysis depends on His159, which acts as the Proton donor/acceptor. Gln241 contributes to the substrate binding site. Ser289 acts as the Proton donor/acceptor in catalysis. Lys295 is modified (N6-acetyllysine). Residues Arg303, Arg329, Ser334, and Arg338 each contribute to the substrate site. Residue Lys415 forms a Glycyl lysine isopeptide (Lys-Gly) (interchain with G-Cter in SUMO1) linkage.

Belongs to the lyase 1 family. Adenylosuccinate lyase subfamily. As to quaternary structure, homotetramer. Residues from neighboring subunits contribute catalytic and substrate-binding residues to each active site.

The enzyme catalyses N(6)-(1,2-dicarboxyethyl)-AMP = fumarate + AMP. The catalysed reaction is (2S)-2-[5-amino-1-(5-phospho-beta-D-ribosyl)imidazole-4-carboxamido]succinate = 5-amino-1-(5-phospho-beta-D-ribosyl)imidazole-4-carboxamide + fumarate. It participates in purine metabolism; AMP biosynthesis via de novo pathway; AMP from IMP: step 2/2. Its pathway is purine metabolism; IMP biosynthesis via de novo pathway; 5-amino-1-(5-phospho-D-ribosyl)imidazole-4-carboxamide from 5-amino-1-(5-phospho-D-ribosyl)imidazole-4-carboxylate: step 2/2. Functionally, catalyzes two non-sequential steps in de novo AMP synthesis: converts (S)-2-(5-amino-1-(5-phospho-D-ribosyl)imidazole-4-carboxamido)succinate (SAICAR) to fumarate plus 5-amino-1-(5-phospho-D-ribosyl)imidazole-4-carboxamide, and thereby also contributes to de novo IMP synthesis, and converts succinyladenosine monophosphate (SAMP) to AMP and fumarate. This chain is Adenylosuccinate lyase (Adsl), found in Mus musculus (Mouse).